Here is a 96-residue protein sequence, read N- to C-terminus: ESAT-6-like protein EsxH (96 aa).

The Zn(2+) site is built by His-14, His-70, His-76, and Glu-77.

This sequence belongs to the WXG100 family. ESAT-6 subfamily. Forms a tight 1:1 complex with EsxG. When it is complexed to EsxG, interacts directly with host HGS/HRS.

The protein localises to the secreted. EsxH, in complex with EsxG, disrupts ESCRT function and impairs host phagosome maturation, thereby promoting intracellular bacterial growth. The complex acts by interacting, via EsxH, with the host hepatocyte growth factor-regulated tyrosine kinase substrate (HGS/HRS), a component of the ESCRT machinery. In Mycobacterium tuberculosis (strain ATCC 25618 / H37Rv), this protein is ESAT-6-like protein EsxH.